Consider the following 115-residue polypeptide: Large ribosomal subunit protein bL19 (115 aa).

It belongs to the bacterial ribosomal protein bL19 family.

In terms of biological role, this protein is located at the 30S-50S ribosomal subunit interface and may play a role in the structure and function of the aminoacyl-tRNA binding site. This is Large ribosomal subunit protein bL19 from Streptococcus suis (strain 98HAH33).